The following is a 339-amino-acid chain: Phosphate acyltransferase (339 aa).

The protein belongs to the PlsX family. Homodimer. Probably interacts with PlsY.

The protein localises to the cytoplasm. It catalyses the reaction a fatty acyl-[ACP] + phosphate = an acyl phosphate + holo-[ACP]. The protein operates within lipid metabolism; phospholipid metabolism. Catalyzes the reversible formation of acyl-phosphate (acyl-PO(4)) from acyl-[acyl-carrier-protein] (acyl-ACP). This enzyme utilizes acyl-ACP as fatty acyl donor, but not acyl-CoA. The protein is Phosphate acyltransferase of Helicobacter acinonychis (strain Sheeba).